A 270-amino-acid chain; its full sequence is Protein-ADP-ribose hydrolase (270 aa).

A Macro domain is found at 73–267 (VSVKDCQKTN…LYDTYLQKEN (195 aa)). Positions 92, 93, and 106 each coordinate ADP-D-ribose. Zn(2+) is bound by residues Cys-112, His-117, and Cys-119. Residues Cys-119, Ile-120, Asp-121, Ser-212, Thr-213, Gly-214, Glu-215, and Phe-216 each coordinate ADP-D-ribose.

This sequence belongs to the MacroD-type family. Zn-Macro subfamily. The cofactor is Zn(2+).

The enzyme catalyses 4-O-(ADP-D-ribosyl)-L-aspartyl-[protein] + H2O = L-aspartyl-[protein] + ADP-D-ribose + H(+). ADP-ribosylhydrolase that specifically reverses the SirTM-mediated mono-ADP-ribosylation at an asparatate residue of GcvH-L, by releasing ADP-ribose from the target protein. May play a role in the regulation of the response to host-induced oxidative stress. This chain is Protein-ADP-ribose hydrolase, found in Streptococcus pyogenes serotype M18 (strain MGAS8232).